The following is a 296-amino-acid chain: Release factor glutamine methyltransferase (296 aa).

Residues 133–137, Asp-156, and Asn-201 each bind S-adenosyl-L-methionine; that span reads GTGSG. 201-204 is a binding site for substrate; it reads NPPY.

This sequence belongs to the protein N5-glutamine methyltransferase family. PrmC subfamily.

The catalysed reaction is L-glutaminyl-[peptide chain release factor] + S-adenosyl-L-methionine = N(5)-methyl-L-glutaminyl-[peptide chain release factor] + S-adenosyl-L-homocysteine + H(+). Methylates the class 1 translation termination release factors RF1/PrfA and RF2/PrfB on the glutamine residue of the universally conserved GGQ motif. The chain is Release factor glutamine methyltransferase from Rhodopirellula baltica (strain DSM 10527 / NCIMB 13988 / SH1).